Reading from the N-terminus, the 297-residue chain is MPPSPCAVLRVRHTKPARAAGVAAHRSFSLCNEAVYRRGQKVFPLVLRRAARFLHECLPARCEVFEHARSEAKKVHRRYFLPGECAGRACRVWRAVFRALXGNDPSAAVRVPADVRVFVYGTHQASCGGDCGGGGRDCGVSVRKGADTARNATGFAERVHKGVADHGVACRVQPLRGKVRGKRFVRVASVVVISVDNRKRCSQLCACAQQRVRRPPRRAPRRMRQSGAVCPCFLCREGLKHVLRIAVLREVVKQARAKVALYIMPNNTQHAGKPGAQHRTRRSPPAFRRADRLRQSA.

A disordered region spans residues Asn-267–Ala-297. Residues Arg-288–Ala-297 show a composition bias toward basic and acidic residues.

This is an uncharacterized protein from Treponema pallidum (strain Nichols).